The following is a 321-amino-acid chain: Quinol oxidase subunit 2 (321 aa).

A signal peptide spans Met1 to Gly25. Residue Cys26 is the site of N-palmitoyl cysteine attachment. Cys26 is lipidated: S-diacylglycerol cysteine. 2 helical membrane passes run Ser49–Val69 and Thr90–Pro110. Residues Gln294–Glu321 form a disordered region. Positions Ser300–Glu321 are enriched in basic and acidic residues.

This sequence belongs to the cytochrome c oxidase subunit 2 family.

It localises to the cell membrane. It carries out the reaction 2 a quinol + O2 = 2 a quinone + 2 H2O. Catalyzes quinol oxidation with the concomitant reduction of oxygen to water. Major component for energy conversion during vegetative growth. Subunit II transfers the electrons from a quinol to the binuclear center of the catalytic subunit I. The protein is Quinol oxidase subunit 2 (qoxA) of Bacillus spizizenii (strain ATCC 23059 / NRRL B-14472 / W23) (Bacillus subtilis subsp. spizizenii).